The chain runs to 416 residues: Adrenocortical dysplasia protein (416 aa).

The short motif at 11-13 (PWI) is the PWI element. Serine 25 carries the post-translational modification Phosphoserine. Residues 156–245 (ESASSSAGLT…SSTGSSQKAR (90 aa)) are interaction with POT1. A compositionally biased stretch (polar residues) spans 234-251 (ILSSTGSSQKARGTSASP). The interval 234–306 (ILSSTGSSQK…TSPPCNSTPS (73 aa)) is disordered. The segment covering 259 to 272 (SGASVSLLSALATS) has biased composition (low complexity). The span at 273 to 292 (DPGQMDSSQSPPAVGSTSPR) shows a compositional bias: polar residues. Phosphoserine is present on residues serine 313 and serine 317. Lysine 345 participates in a covalent cross-link: Glycyl lysine isopeptide (Lys-Gly) (interchain with G-Cter in SUMO2).

In terms of assembly, component of the shelterin complex (telosome) composed of TERF1, TERF2, TINF2, TERF2IP ACD and POT1. Forms heterodimers with POT1. Identified in a complex with POT1 and single-stranded telomeric DNA. Interacts with STN1 and TINF2. As to expression, ubiquitous.

It localises to the nucleus. It is found in the chromosome. The protein localises to the telomere. Functionally, component of the shelterin complex (telosome) that is involved in the regulation of telomere length and protection. Shelterin associates with arrays of double-stranded TTAGGG repeats added by telomerase and protects chromosome ends. Without its protective activity, telomeres are no longer hidden from the DNA damage surveillance and chromosome ends are inappropriately processed by DNA repair pathways. Promotes binding of POT1 to single-stranded telomeric DNA. Modulates the inhibitory effects of POT1 on telomere elongation. The ACD-POT1 heterodimer enhances telomere elongation by recruiting telomerase to telomeres and increasing its processivity. May play a role in organogenesis. This Mus musculus (Mouse) protein is Adrenocortical dysplasia protein.